A 287-amino-acid polypeptide reads, in one-letter code: ATP synthase gamma chain (287 aa).

The protein belongs to the ATPase gamma chain family. F-type ATPases have 2 components, CF(1) - the catalytic core - and CF(0) - the membrane proton channel. CF(1) has five subunits: alpha(3), beta(3), gamma(1), delta(1), epsilon(1). CF(0) has three main subunits: a, b and c.

The protein resides in the cell inner membrane. Produces ATP from ADP in the presence of a proton gradient across the membrane. The gamma chain is believed to be important in regulating ATPase activity and the flow of protons through the CF(0) complex. The protein is ATP synthase gamma chain of Parabacteroides distasonis (strain ATCC 8503 / DSM 20701 / CIP 104284 / JCM 5825 / NCTC 11152).